The following is a 142-amino-acid chain: Cystatin-8 (142 aa).

The N-terminal stretch at 1–21 is a signal peptide; sequence MPRCRWLSLILLTIPLALVAR. Residues asparagine 27 and asparagine 39 are each glycosylated (N-linked (GlcNAc...) asparagine). The Secondary area of contact motif lies at 77–81; that stretch reads QVTNL. Disulfide bonds link cysteine 95–cysteine 105 and cysteine 119–cysteine 139.

It belongs to the cystatin family. In terms of tissue distribution, proximal caput region of the epididymis. Lower expression in the testis. Within the testis it is localized to the elongating spermatids, whereas within the epididymis it is exclusively synthesized by the proximal caput epithelium.

The protein resides in the secreted. Performs a specialized role during sperm development and maturation. This Homo sapiens (Human) protein is Cystatin-8 (CST8).